The primary structure comprises 425 residues: Formyl-CoA:oxalate CoA-transferase (425 aa).

Residues 17–18 (QS), Arg-38, 72–75 (LDTK), 96–98 (NFG), Arg-104, and 136–139 (KVYE) contribute to the CoA site. Catalysis depends on Asp-168, which acts as the Nucleophile. A substrate-binding site is contributed by 247–249 (GGQ).

This sequence belongs to the CoA-transferase III family. Frc subfamily. In terms of assembly, homodimer.

It carries out the reaction formyl-CoA + oxalate = oxalyl-CoA + formate. The protein operates within metabolic intermediate degradation; oxalate degradation; CO(2) and formate from oxalate: step 1/2. In terms of biological role, involved in the catabolism of oxalate and in the adapatation to low pH via the induction of the oxalate-dependent acid tolerance response (ATR). Catalyzes the transfer of the CoA moiety from formyl-CoA to oxalate. The chain is Formyl-CoA:oxalate CoA-transferase from Bradyrhizobium sp. (strain ORS 278).